A 273-amino-acid chain; its full sequence is SUMO-1 cysteine protease S273R (273 aa).

Residues His-168 and Asn-187 contribute to the active site. Residue Gln-226 coordinates substrate. The active-site Nucleophile is Cys-232.

The protein belongs to the peptidase C63 family.

The protein localises to the host cytoplasm. The protein resides in the virion. In terms of biological role, cysteine protease that plays several role during infection including processing of the structural polyprotein or inhibition of the host immune response. Catalyzes the maturation of the pp220 and pp62 polyprotein precursors into core-shell proteins. Plays a role in the disruption of host pyroptosis via specific cleavage of gasdermin D/GSDMD. In addition, strongly decreases the host cGAS-STING signaling by targeting IKBKE via its enzymatic activity. Also impairs host FOXJ1-mediated antiviral effect via degradation of FOXJ1. This Ornithodoros (relapsing fever ticks) protein is SUMO-1 cysteine protease S273R.